The primary structure comprises 891 residues: Alanine--tRNA ligase (891 aa).

4 residues coordinate Zn(2+): H576, H580, C684, and H688.

This sequence belongs to the class-II aminoacyl-tRNA synthetase family. Requires Zn(2+) as cofactor.

Its subcellular location is the cytoplasm. It catalyses the reaction tRNA(Ala) + L-alanine + ATP = L-alanyl-tRNA(Ala) + AMP + diphosphate. Catalyzes the attachment of alanine to tRNA(Ala) in a two-step reaction: alanine is first activated by ATP to form Ala-AMP and then transferred to the acceptor end of tRNA(Ala). Also edits incorrectly charged Ser-tRNA(Ala) and Gly-tRNA(Ala) via its editing domain. The protein is Alanine--tRNA ligase of Orientia tsutsugamushi (strain Boryong) (Rickettsia tsutsugamushi).